The chain runs to 324 residues: Pancreas transcription factor 1 subunit alpha (324 aa).

A bHLH domain is found at 160–212 (QLRQAANVRERRRMQSINDAFEGLRSHIPTLPYEKRLSKVDTLRLAIGYINFL). Residues 302 to 324 (DPRKLNSKSFDNIENEPPFEFVS) are disordered.

As to quaternary structure, component of the pancreas transcription factor 1 complex (PTF1) which is composed of TCF3/p75, TCF12/p64 and PTF1A/p48. TCF3 is responsible for the nuclear import of the p48/p64 complex. Interacts with TCF3 and RBPSUH/RBP-Jkappa. Expressed in precursors of pancreatic islets, acini and ducts.

It localises to the nucleus. The protein localises to the cytoplasm. In terms of biological role, transcription factor implicated in the cell fate determination in various organs. Binds to the E-box consensus sequence 5'-CANNTG-3'. Plays a role in early and late pancreas development and differentiation. Important for determining whether cells allocated to the pancreatic buds continue towards pancreatic organogenesis or revert back to duodenal fates. May be involved in the maintenance of exocrine pancreas-specific gene expression including ELA1 and amylase. Required for the formation of pancreatic acinar and ductal cells. Plays an important role in cerebellar development. Directly regulated by FOXN4 and RORC during retinal development, FOXN4-PTF1A pathway plays a central role in directing the differentiation of retinal progenitors towards horizontal and amacrine fates. The chain is Pancreas transcription factor 1 subunit alpha (Ptf1a) from Mus musculus (Mouse).